The following is a 317-amino-acid chain: Lipoyl synthase (317 aa).

The segment at methionine 1–glutamate 21 is disordered. Positions arginine 12–glutamate 21 are enriched in basic and acidic residues. Residues cysteine 57, cysteine 62, cysteine 68, cysteine 83, cysteine 87, cysteine 90, and serine 296 each contribute to the [4Fe-4S] cluster site. The Radical SAM core domain maps to tryptophan 69 to leucine 285.

The protein belongs to the radical SAM superfamily. Lipoyl synthase family. It depends on [4Fe-4S] cluster as a cofactor.

The protein resides in the cytoplasm. The catalysed reaction is [[Fe-S] cluster scaffold protein carrying a second [4Fe-4S](2+) cluster] + N(6)-octanoyl-L-lysyl-[protein] + 2 oxidized [2Fe-2S]-[ferredoxin] + 2 S-adenosyl-L-methionine + 4 H(+) = [[Fe-S] cluster scaffold protein] + N(6)-[(R)-dihydrolipoyl]-L-lysyl-[protein] + 4 Fe(3+) + 2 hydrogen sulfide + 2 5'-deoxyadenosine + 2 L-methionine + 2 reduced [2Fe-2S]-[ferredoxin]. It functions in the pathway protein modification; protein lipoylation via endogenous pathway; protein N(6)-(lipoyl)lysine from octanoyl-[acyl-carrier-protein]: step 2/2. Its function is as follows. Catalyzes the radical-mediated insertion of two sulfur atoms into the C-6 and C-8 positions of the octanoyl moiety bound to the lipoyl domains of lipoate-dependent enzymes, thereby converting the octanoylated domains into lipoylated derivatives. This Xanthobacter autotrophicus (strain ATCC BAA-1158 / Py2) protein is Lipoyl synthase.